The sequence spans 153 residues: MTTRRGRRALLIAGGVGLLALAAALVLNALRSNLVFFFSPTQVHAHEAPSSGSFRVGGLVRAGSVERAADGLTLRFVVTDTVREVPVAYTGLLPALFREGKGVVVAGTMGADGVFRATEVLAKHNENYMPPQAADALRQAGALPSATLQTEAR.

Over 1–8 (MTTRRGRR) the chain is Cytoplasmic. Residues 9–29 (ALLIAGGVGLLALAAALVLNA) form a helical; Signal-anchor for type II membrane protein membrane-spanning segment. Residues 30-153 (LRSNLVFFFS…PSATLQTEAR (124 aa)) lie on the Periplasmic side of the membrane. Positions 124 and 128 each coordinate heme.

It belongs to the CcmE/CycJ family.

The protein localises to the cell inner membrane. Its function is as follows. Heme chaperone required for the biogenesis of c-type cytochromes. Transiently binds heme delivered by CcmC and transfers the heme to apo-cytochromes in a process facilitated by CcmF and CcmH. In Bordetella parapertussis (strain 12822 / ATCC BAA-587 / NCTC 13253), this protein is Cytochrome c-type biogenesis protein CcmE.